The sequence spans 197 residues: Proteinase inhibitor type-2 (197 aa).

A signal peptide spans 1–24; sequence MAVHKVSFVAHLLVLGMFLLLVDA. 3 consecutive repeat copies span residues 24–80, 81–140, and 141–196. 8 disulfides stabilise this stretch: Cys27/Cys115, Cys31/Cys111, Cys39/Cys121, Cys51/Cys88, Cys54/Cys72, Cys55/Cys84, Cys61/Cys97, and Cys114/Cys132.

Belongs to the protease inhibitor I20 (potato type II proteinase inhibitor) family.

This chain is Proteinase inhibitor type-2, found in Nicotiana tabacum (Common tobacco).